A 341-amino-acid polypeptide reads, in one-letter code: GTP 3',8-cyclase (341 aa).

Residues 17 to 235 form the Radical SAM core domain; the sequence is TYGRVATDLR…LRTRFELTAE (219 aa). Position 26 (Arg-26) interacts with GTP. Residues Cys-33 and Cys-37 each contribute to the [4Fe-4S] cluster site. Tyr-39 contributes to the S-adenosyl-L-methionine binding site. Cys-40 is a [4Fe-4S] cluster binding site. Arg-77 is a GTP binding site. Gly-81 is an S-adenosyl-L-methionine binding site. Thr-108 contributes to the GTP binding site. Position 132 (Ser-132) interacts with S-adenosyl-L-methionine. GTP is bound at residue Lys-169. Met-203 lines the S-adenosyl-L-methionine pocket. Residues Cys-268 and Cys-271 each coordinate [4Fe-4S] cluster. GTP is bound at residue 273–275; that stretch reads RTR. [4Fe-4S] cluster is bound at residue Cys-285.

Belongs to the radical SAM superfamily. MoaA family. As to quaternary structure, monomer and homodimer. It depends on [4Fe-4S] cluster as a cofactor.

The catalysed reaction is GTP + AH2 + S-adenosyl-L-methionine = (8S)-3',8-cyclo-7,8-dihydroguanosine 5'-triphosphate + 5'-deoxyadenosine + L-methionine + A + H(+). Its pathway is cofactor biosynthesis; molybdopterin biosynthesis. In terms of biological role, catalyzes the cyclization of GTP to (8S)-3',8-cyclo-7,8-dihydroguanosine 5'-triphosphate. In Streptomyces coelicolor (strain ATCC BAA-471 / A3(2) / M145), this protein is GTP 3',8-cyclase.